The chain runs to 210 residues: Urease accessory protein UreF (210 aa).

This sequence belongs to the UreF family. In terms of assembly, ureD, UreF and UreG form a complex that acts as a GTP-hydrolysis-dependent molecular chaperone, activating the urease apoprotein by helping to assemble the nickel containing metallocenter of UreC. The UreE protein probably delivers the nickel.

Its subcellular location is the cytoplasm. Functionally, required for maturation of urease via the functional incorporation of the urease nickel metallocenter. This Dinoroseobacter shibae (strain DSM 16493 / NCIMB 14021 / DFL 12) protein is Urease accessory protein UreF.